The sequence spans 528 residues: GMP synthase [glutamine-hydrolyzing] (528 aa).

Positions 13–204 (AIVILDFGSQ…VYDICSCEPD (192 aa)) constitute a Glutamine amidotransferase type-1 domain. Cysteine 90 functions as the Nucleophile in the catalytic mechanism. Catalysis depends on residues histidine 178 and glutamate 180. The GMPS ATP-PPase domain maps to 205–403 (WTTNLFIDEA…LGLPDEIVRR (199 aa)). Position 232 to 238 (232 to 238 (SGGVDSS)) interacts with ATP.

Homodimer.

The enzyme catalyses XMP + L-glutamine + ATP + H2O = GMP + L-glutamate + AMP + diphosphate + 2 H(+). It participates in purine metabolism; GMP biosynthesis; GMP from XMP (L-Gln route): step 1/1. Functionally, catalyzes the synthesis of GMP from XMP. The polypeptide is GMP synthase [glutamine-hydrolyzing] (Prochlorococcus marinus (strain NATL2A)).